The chain runs to 350 residues: UDP-3-O-acylglucosamine N-acyltransferase (350 aa).

The active-site Proton acceptor is the His240.

Belongs to the transferase hexapeptide repeat family. LpxD subfamily. Homotrimer.

It catalyses the reaction a UDP-3-O-[(3R)-3-hydroxyacyl]-alpha-D-glucosamine + a (3R)-hydroxyacyl-[ACP] = a UDP-2-N,3-O-bis[(3R)-3-hydroxyacyl]-alpha-D-glucosamine + holo-[ACP] + H(+). The protein operates within bacterial outer membrane biogenesis; LPS lipid A biosynthesis. Functionally, catalyzes the N-acylation of UDP-3-O-acylglucosamine using 3-hydroxyacyl-ACP as the acyl donor. Is involved in the biosynthesis of lipid A, a phosphorylated glycolipid that anchors the lipopolysaccharide to the outer membrane of the cell. This is UDP-3-O-acylglucosamine N-acyltransferase from Methylobacillus flagellatus (strain ATCC 51484 / DSM 6875 / VKM B-1610 / KT).